The chain runs to 365 residues: Aminomethyltransferase (365 aa).

This sequence belongs to the GcvT family. As to quaternary structure, the glycine cleavage system is composed of four proteins: P, T, L and H.

The catalysed reaction is N(6)-[(R)-S(8)-aminomethyldihydrolipoyl]-L-lysyl-[protein] + (6S)-5,6,7,8-tetrahydrofolate = N(6)-[(R)-dihydrolipoyl]-L-lysyl-[protein] + (6R)-5,10-methylene-5,6,7,8-tetrahydrofolate + NH4(+). Its function is as follows. The glycine cleavage system catalyzes the degradation of glycine. This chain is Aminomethyltransferase, found in Chlorobaculum tepidum (strain ATCC 49652 / DSM 12025 / NBRC 103806 / TLS) (Chlorobium tepidum).